The sequence spans 93 residues: YcgL domain-containing protein VV1058 (93 aa).

The YcgL domain occupies 1–84 (MLCSIYKSSK…PPENLLQQHK (84 aa)). Positions 74-93 (PPPENLLQQHKERKAQQKND) are disordered.

This is YcgL domain-containing protein VV1058 from Vibrio vulnificus (strain YJ016).